An 878-amino-acid polypeptide reads, in one-letter code: MutS protein homolog 4 (878 aa).

Positions 22 to 41 (NSSNSISKPSTKKSIRNQKS) are disordered. 634-641 (GCNMSGKS) lines the ATP pocket.

Belongs to the DNA mismatch repair MutS family. In terms of assembly, heterooligomer of MSH4 and MSH5.

Its function is as follows. Involved in meiotic recombination. Facilitate crossovers between homologs during meiosis. The polypeptide is MutS protein homolog 4 (MSH4) (Saccharomyces cerevisiae (strain ATCC 204508 / S288c) (Baker's yeast)).